We begin with the raw amino-acid sequence, 100 residues long: Conantokin-G (100 aa).

Positions 1–21 (MHLYTYLYLLVPLVTFHLILG) are cleaved as a signal peptide. A propeptide spanning residues 22 to 80 (TGTLDDGGALTERRSADATALKAEPVLLQKSAARSTDDNGKDRLTQMKRILKQRGNKAR) is cleaved from the precursor. The segment at 52 to 100 (SAARSTDDNGKDRLTQMKRILKQRGNKARGEEELQENQELIREKSNGKR) is disordered. Over residues 56–66 (STDDNGKDRLT) the composition is skewed to basic and acidic residues. Positions 61 to 80 (GKDRLTQMKRILKQRGNKAR) are gamma-carboxylation recognition sequence that plays a role in the conversion of Glu to carboxy-Glu (Gla). E83 is a binding site for a divalent metal cation. A 4-carboxyglutamate mark is found at E83, E84, E87, E90, and E94. The a divalent metal cation site is built by E87, E90, and E94. Over residues 90-100 (ELIREKSNGKR) the composition is skewed to basic and acidic residues. N97 bears the Asparagine amide mark.

It belongs to the conotoxin B superfamily. Requires Ca(2+) as cofactor. It depends on Mg(2+) as a cofactor. In terms of tissue distribution, expressed by the venom duct.

It is found in the secreted. Conantokins inhibit N-methyl-D-aspartate (NMDA) receptors. This toxin is selective for the NR2B/GRIN2B subunit. Induces sleep-like symptoms in young mice and hyperactivity in older mice. The protein is Conantokin-G of Conus geographus (Geography cone).